A 258-amino-acid chain; its full sequence is Imidazole glycerol phosphate synthase subunit HisF (258 aa).

Catalysis depends on residues aspartate 11 and aspartate 130.

The protein belongs to the HisA/HisF family. Heterodimer of HisH and HisF.

It localises to the cytoplasm. The catalysed reaction is 5-[(5-phospho-1-deoxy-D-ribulos-1-ylimino)methylamino]-1-(5-phospho-beta-D-ribosyl)imidazole-4-carboxamide + L-glutamine = D-erythro-1-(imidazol-4-yl)glycerol 3-phosphate + 5-amino-1-(5-phospho-beta-D-ribosyl)imidazole-4-carboxamide + L-glutamate + H(+). Its pathway is amino-acid biosynthesis; L-histidine biosynthesis; L-histidine from 5-phospho-alpha-D-ribose 1-diphosphate: step 5/9. Its function is as follows. IGPS catalyzes the conversion of PRFAR and glutamine to IGP, AICAR and glutamate. The HisF subunit catalyzes the cyclization activity that produces IGP and AICAR from PRFAR using the ammonia provided by the HisH subunit. The sequence is that of Imidazole glycerol phosphate synthase subunit HisF from Cronobacter sakazakii (strain ATCC BAA-894) (Enterobacter sakazakii).